The primary structure comprises 415 residues: Gamma-glutamyl phosphate reductase (415 aa).

The protein belongs to the gamma-glutamyl phosphate reductase family.

It localises to the cytoplasm. It carries out the reaction L-glutamate 5-semialdehyde + phosphate + NADP(+) = L-glutamyl 5-phosphate + NADPH + H(+). The protein operates within amino-acid biosynthesis; L-proline biosynthesis; L-glutamate 5-semialdehyde from L-glutamate: step 2/2. Its function is as follows. Catalyzes the NADPH-dependent reduction of L-glutamate 5-phosphate into L-glutamate 5-semialdehyde and phosphate. The product spontaneously undergoes cyclization to form 1-pyrroline-5-carboxylate. This chain is Gamma-glutamyl phosphate reductase, found in Clostridium perfringens (strain 13 / Type A).